Consider the following 559-residue polypeptide: MWINFVKLRLFCCLLAVLMVVVLVVNVTQVEYLDRETASATFIDSGGQFVSSQVIRISRNPYCGYERQILSSRERLEEDSLLAALQWQEPDVGPVPFLKSTDPSSSYFVILNSAAFFRVGSQLEVLVHVQDFQRKPKKYGGDYLQARIHSPKLQAGAVGRVVDYQNGFYKVFFTLLWPGQVKVSISLVHPSEGIRVLQYLQEKKPDRVYFKSLFRSGRISETTECNVCLPGSLPLCNFTDLYTGEPWFCFKPKKLPCSSRINHFKGGYLKGLLTATENAFFQSGVNIKMPINSSGPDWVTVIPRNIKETNSLELSQGLGTFPSGYYYKDQWRPRRFKMRQFNDPDNITECLQRKVVYLFGDSTIRQWFEYLTTFVPDLVEFNLGSPKNVGPFLAVDQKHNILLKYRCHGPPIRFTTVFSSDLRYVANELNGIVGGKNTVVAIAVWSHFSTFPLEVYIRRLRNIRRAVVQLLDRSPKTVVVIRTANVQELGPEISLFNSDWYNFQLDTILRKMFSGVGVYLVDAWEMTLAHYLPHKLHPDEVIVKNQVDMFLSFVCPLET.

Positions 1–30 (MWINFVKLRLFCCLLAVLMVVVLVVNVTQV) are cleaved as a signal peptide. N-linked (GlcNAc...) asparagine glycans are attached at residues N26, N237, and N346.

This sequence belongs to the NXPE family.

Its subcellular location is the secreted. This chain is NXPE family member 3 (NXPE3), found in Bos taurus (Bovine).